A 135-amino-acid polypeptide reads, in one-letter code: S-protein homolog 29 (135 aa).

A signal peptide spans 1 to 24 (MKNSSKIFVVLSIILFYVISSCHG). N-linked (GlcNAc...) asparagine glycosylation occurs at asparagine 110.

Belongs to the plant self-incompatibility (S1) protein family.

The protein resides in the secreted. The chain is S-protein homolog 29 from Arabidopsis thaliana (Mouse-ear cress).